We begin with the raw amino-acid sequence, 319 residues long: Ribonuclease Z (319 aa).

H62, H64, D66, H67, H145, D215, and H273 together coordinate Zn(2+). The active-site Proton acceptor is D66.

The protein belongs to the RNase Z family. Homodimer. It depends on Zn(2+) as a cofactor.

The enzyme catalyses Endonucleolytic cleavage of RNA, removing extra 3' nucleotides from tRNA precursor, generating 3' termini of tRNAs. A 3'-hydroxy group is left at the tRNA terminus and a 5'-phosphoryl group is left at the trailer molecule.. Zinc phosphodiesterase, which displays some tRNA 3'-processing endonuclease activity. Probably involved in tRNA maturation, by removing a 3'-trailer from precursor tRNA. The polypeptide is Ribonuclease Z (Borreliella afzelii (strain PKo) (Borrelia afzelii)).